A 359-amino-acid polypeptide reads, in one-letter code: Trans-enoyl reductase FSL5 (359 aa).

47–50 contributes to the NADP(+) binding site; the sequence is IDGK. 134-141 serves as a coordination point for substrate; the sequence is SGVGTIGL. Residues 169-172, 192-195, Tyr-210, and 257-258 contribute to the NADP(+) site; these read STAT, SPHN, and LE. 277 to 281 contributes to the substrate binding site; the sequence is GPTLL. 346–347 is a binding site for NADP(+); the sequence is VS.

The protein belongs to the zinc-containing alcohol dehydrogenase family. In terms of assembly, monomer.

Its pathway is secondary metabolite biosynthesis. Its function is as follows. Trans-enoyl reductase; part of the gene cluster that mediates the biosynthesis of fusarielins F, G and H, decaketide compounds with 5 methylations and a decaline core that act as mycoestrogens as they stimulate growth of MCF-7 breast cancer cells. The initial compound in the pathway is produced by the reducing polyketide synthase FSL1. FSL1 lacks an active enoyl reductase (ER) domain and biosynthesis of fusarielins relies on the trans-acting enoyl reductase FSL5, before it is released through hydrolysis catalyzed by the thioesterase FSL2. Fusarielins F, G, and H have a C11=C12 cis double bond and is fully reduced between C10 and C11 and between C12 and C13. FSL3 can be involved in the formation of the C11=C12 cis double bond by moving a hypothetical C10=C11 or C12=C13 trans double bond to form prefusarielin. Prefusarielin is oxygenated at C15 and C16 by the cytochrome P450 monooxygenase FSL4, resulting in fusarielin F, which subsequently is epoxidized into fusarielin G by the same enzyme. The final step in the pathway is a reduction of the carboxylic acid moiety to yield fusarielin H via a still undetermined mechanism. The polypeptide is Trans-enoyl reductase FSL5 (Gibberella zeae (strain ATCC MYA-4620 / CBS 123657 / FGSC 9075 / NRRL 31084 / PH-1) (Wheat head blight fungus)).